The sequence spans 450 residues: UDP-N-acetylmuramoylalanine--D-glutamate ligase (450 aa).

119–125 is an ATP binding site; that stretch reads GSNGKTT.

It belongs to the MurCDEF family.

The protein localises to the cytoplasm. It carries out the reaction UDP-N-acetyl-alpha-D-muramoyl-L-alanine + D-glutamate + ATP = UDP-N-acetyl-alpha-D-muramoyl-L-alanyl-D-glutamate + ADP + phosphate + H(+). Its pathway is cell wall biogenesis; peptidoglycan biosynthesis. Functionally, cell wall formation. Catalyzes the addition of glutamate to the nucleotide precursor UDP-N-acetylmuramoyl-L-alanine (UMA). This is UDP-N-acetylmuramoylalanine--D-glutamate ligase from Streptococcus pneumoniae (strain ATCC 700669 / Spain 23F-1).